Reading from the N-terminus, the 338-residue chain is Anthranilate phosphoribosyltransferase (338 aa).

Residues Gly78, 81–82 (GD), Thr86, 88–91 (NIST), 106–114 (KHGNRSVSS), and Ser118 each bind 5-phospho-alpha-D-ribose 1-diphosphate. Position 78 (Gly78) interacts with anthranilate. Mg(2+) is bound at residue Ser90. Position 109 (Asn109) interacts with anthranilate. Residue Arg164 participates in anthranilate binding. Mg(2+) contacts are provided by Asp223 and Glu224.

It belongs to the anthranilate phosphoribosyltransferase family. In terms of assembly, homodimer. Mg(2+) serves as cofactor.

It catalyses the reaction N-(5-phospho-beta-D-ribosyl)anthranilate + diphosphate = 5-phospho-alpha-D-ribose 1-diphosphate + anthranilate. The protein operates within amino-acid biosynthesis; L-tryptophan biosynthesis; L-tryptophan from chorismate: step 2/5. In terms of biological role, catalyzes the transfer of the phosphoribosyl group of 5-phosphorylribose-1-pyrophosphate (PRPP) to anthranilate to yield N-(5'-phosphoribosyl)-anthranilate (PRA). This chain is Anthranilate phosphoribosyltransferase, found in Bacillus velezensis (strain DSM 23117 / BGSC 10A6 / LMG 26770 / FZB42) (Bacillus amyloliquefaciens subsp. plantarum).